The sequence spans 177 residues: tRNA (cytidine(56)-2'-O)-methyltransferase (177 aa).

Residues Leu84 and 109 to 113 (GAEKV) contribute to the S-adenosyl-L-methionine site.

Belongs to the aTrm56 family. Homodimer.

It is found in the cytoplasm. It catalyses the reaction cytidine(56) in tRNA + S-adenosyl-L-methionine = 2'-O-methylcytidine(56) in tRNA + S-adenosyl-L-homocysteine + H(+). Functionally, specifically catalyzes the AdoMet-dependent 2'-O-ribose methylation of cytidine at position 56 in tRNAs. This Methanosarcina acetivorans (strain ATCC 35395 / DSM 2834 / JCM 12185 / C2A) protein is tRNA (cytidine(56)-2'-O)-methyltransferase.